The chain runs to 298 residues: MTFSTTKSVAMSPDDDAPSFDINSSRRLMSHSEVESRGNGYEVLQQAGTVRILLSRPERGNALSLSLAKDLTQLFQTFSSQHSVHRIVLTGKGKYFCSGMDLGEELYEDATERCLALQDLFGAIDACPKTTVAAINGPAFGGGVGLAFVCDIRVAVSTSFFCLSEVKLGLCPATVSRFIIREWGVSLARMAMLTARKIHPQALQEMGVLHAVALDEEALKVVTENLLDDLGFAAPQASAWCKALTRKTRNGNSDHDQFARQISETMVAPGSESEYGVAQFRRGRKNIRWEQAECLHTR.

The tract at residues 1 to 23 (MTFSTTKSVAMSPDDDAPSFDIN) is disordered.

Belongs to the enoyl-CoA hydratase/isomerase family.

Its pathway is mycotoxin biosynthesis. Functionally, enoyl-CoA hydratase; part of the gene clusters that mediate the biosynthesis of the host-selective toxins (HSTs) AK-toxins responsible for Japanese pear black spot disease by the Japanese pear pathotype. AK-toxins are esters of 9,10-epoxy 8-hydroxy 9-methyldecatrienoic acid (EDA). On cellular level, AK-toxins affect plasma membrane of susceptible cells and cause a sudden increase in loss of K(+) after a few minutes of toxin treatment. The acyl-CoA ligase AKT1, the hydrolase AKT2 and enoyl-CoA hydratase AKT3 are all involved in the biosynthesis of the AK-, AF- and ACT-toxin common 9,10-epoxy-8-hydroxy-9-methyl-decatrienoic acid (EDA) structural moiety. Part of the EDA biosynthesis occurs in the peroxisome since these 3 enzymes are localized in peroxisomes. The exact roles of the 3 enzymes, as well as of additional AK-toxin clusters enzymes, including AKT4, AKT6 and AKTS1, have still to be elucidated. The Cytochrome P450 monooxygenase AKT7 on the other side functions to limit production of EDA and AK-toxin, probably via the catalysis of a side reaction of EDA or its precursor. This Alternaria alternata (Alternaria rot fungus) protein is Enoyl-CoA hydratase AKT6-1.